We begin with the raw amino-acid sequence, 115 residues long: Aspartate 1-decarboxylase (115 aa).

The Schiff-base intermediate with substrate; via pyruvic acid role is filled by Ser25. Ser25 is modified (pyruvic acid (Ser)). Thr57 is a binding site for substrate. The active-site Proton donor is the Tyr58. 71-73 serves as a coordination point for substrate; it reads GAA.

The protein belongs to the PanD family. In terms of assembly, heterooctamer of four alpha and four beta subunits. The cofactor is pyruvate. In terms of processing, is synthesized initially as an inactive proenzyme, which is activated by self-cleavage at a specific serine bond to produce a beta-subunit with a hydroxyl group at its C-terminus and an alpha-subunit with a pyruvoyl group at its N-terminus.

It is found in the cytoplasm. The enzyme catalyses L-aspartate + H(+) = beta-alanine + CO2. The protein operates within cofactor biosynthesis; (R)-pantothenate biosynthesis; beta-alanine from L-aspartate: step 1/1. Catalyzes the pyruvoyl-dependent decarboxylation of aspartate to produce beta-alanine. This is Aspartate 1-decarboxylase from Campylobacter curvus (strain 525.92).